The sequence spans 1579 residues: MSHSDYFNYKPYGDSTEKPSSSKMRQSSSSSSSRLRSESLGRNSNTTQARVASSPISPGLHSTQYFRSPNAVYSPGESPLNTVQLFNRLPGIPQGQFFHQNAISGSSSSSARSSRRPSNIGLPLPKNPQQSLPKLSTQPVPVHKKVEASKTESEIIKKPAPVNSNQDPLLTTPTLVISPELASLNTTNTSIMSTPQNITNQTSNKHIPTRSQPNGSTSSSTLQDIVTTNSSQRSVGHHGGSTTSLRTYKKQYVLNEQLYLRKMRNRANDDYYTRGIVASSNFEDDEENFSNKGEDDLELEMDDLLKVEGEDKDNDFNFGYNFITSSTKNNENVVSMSLNYLKGKLDWLRDVNNDQPCEIEDEEWHSILGSEDLLSKLLQNPMVNNRFEWQTMLSKVLKGDIVRNEKTKIANQGKGPGFNTQFSDDIWIELKAWMNGRTVEDQNKSLRIFRDSTDSVFQEIMAFKLEDNMSADEAAETIKSLVDKYYRVLNLWPNIKRMHAEKPITKTEAFRNRIDTLNSWLNFKFNFDTNIAYLKKWIVGNKELESTTEVDNTTVNLDDPAVFATNCKRFAEQIMKEKDIELIFQKKIFFPLAPWILKAKFFFLKYQKTWNELNLSYLDQDLEFLLMFPMRLVKDIILIRLSYAKKIQNPTLMMIDQMMDDFSTYIKLAVQMKFTVASYCNDWFFKVKIDPEFDHTVVEGLEYFFSILELRILYSGKNSFKTSKEPDLLLKYWEMFRNVGYYIDDAGELIAAEFTKLTLRLVHRLHAYLLRQQNTPPKLENEAAAEKWLVQIFEILGSMKRKLNRFTNILTKAFQNFVRYKIEDHNYLLKQLKETGHFLIYTGGYLEQNGTYLIGSPELLGCKDDDILRIIKNSDIGCDLVPKLEINNSLTIYNALDDNWNSNSSLGSDISNDGTPFYYIKNDLTTQPRSYNGNRVNREPDFENSRSTEEEFYELETRLNSLGYVLVLTPQEPLLWEGEMYNLSDNKTIKPEGLNLKVIPNSIDLMCQGSSYALEYQCDRFQQISGSSVSFLEKKSSSETVKNNLQRINKAYFRCTYSVLKNYTKIVTTFKKVSPVNDLLNNIFLFGRDFGLNFLRINVANNEKRSIIILLMMRLSIGWLKFLAEDCDPTDQRVFRWCVTSMEFAMHMVSGWNILALDECQFSSLKQKISECMSLLISHFDIIGARSIEVEKINQQARSNLDLEDVFDDDMMLQVNSEFRVQSIMELEERIKRNPHQTGKVIDDSDKGNKYLVSLASSISNVSMRWQKRNFIGGGTFGRVYSAVDLDNGEILAVKEINIQDSKSMQKIFPLIKEEMSVLEILNHPNIVSYYGVEVHRDKVNIFMEYCEGGSLAALLEHGRIEDEMVTQVYTLQLLEGLAYLHESGIVHRDVKPENILLDFNGVIKYVDFGAAKKIANNGTRLASMNKIENADGEHEDVTHVSDSKAVKNNENALLDMMGTPMYMAPESITGSTTKGKLGADDVWSLGCVVLEMITGRRPWANLDNEWAIMYHVAAGHTPQFPTKDEVSSAGMKFLERCLIQNPSKRASAVELLMDPWIVQIREIAFGDDSSSTDTEERE.

The tract at residues 1-70 is disordered; it reads MSHSDYFNYK…HSTQYFRSPN (70 aa). Low complexity predominate over residues 21 to 44; the sequence is SSKMRQSSSSSSSRLRSESLGRNS. The span at 45–67 shows a compositional bias: polar residues; the sequence is NTTQARVASSPISPGLHSTQYFR. A phosphoserine mark is found at Ser57, Ser62, Ser78, and Ser118. 2 disordered regions span residues 97-155 and 190-243; these read FFHQ…ESEI and SIMS…GSTT. The segment covering 104-118 has biased composition (low complexity); the sequence is SGSSSSSARSSRRPS. Over residues 127–139 the composition is skewed to polar residues; that stretch reads NPQQSLPKLSTQP. The segment covering 144-155 has biased composition (basic and acidic residues); it reads KKVEASKTESEI. Ser290 is modified (phosphoserine). A Protein kinase domain is found at 1266 to 1558; that stretch reads WQKRNFIGGG…AVELLMDPWI (293 aa). Residues 1272 to 1280 and Lys1295 contribute to the ATP site; that span reads IGGGTFGRV. Residue Asp1390 is the Proton acceptor of the active site. Ser1424 carries the post-translational modification Phosphoserine.

It belongs to the protein kinase superfamily. STE Ser/Thr protein kinase family. MAP kinase kinase kinase subfamily. Interacts with by SSK1.

It catalyses the reaction L-seryl-[protein] + ATP = O-phospho-L-seryl-[protein] + ADP + H(+). The enzyme catalyses L-threonyl-[protein] + ATP = O-phospho-L-threonyl-[protein] + ADP + H(+). Its function is as follows. Kinase involved in a signal transduction pathway that is activated by changes in the osmolarity of the extracellular environment. Activates the PBS2 MAP kinase kinase by phosphorylation. This is MAP kinase kinase kinase SSK2 (SSK2) from Saccharomyces cerevisiae (strain ATCC 204508 / S288c) (Baker's yeast).